Reading from the N-terminus, the 1187-residue chain is DNA-directed RNA polymerase subunit beta (1187 aa).

The protein belongs to the RNA polymerase beta chain family. In terms of assembly, the RNAP catalytic core consists of 2 alpha, 1 beta, 1 beta' and 1 omega subunit. When a sigma factor is associated with the core the holoenzyme is formed, which can initiate transcription.

The enzyme catalyses RNA(n) + a ribonucleoside 5'-triphosphate = RNA(n+1) + diphosphate. Functionally, DNA-dependent RNA polymerase catalyzes the transcription of DNA into RNA using the four ribonucleoside triphosphates as substrates. The protein is DNA-directed RNA polymerase subunit beta of Streptococcus mutans serotype c (strain ATCC 700610 / UA159).